A 316-amino-acid polypeptide reads, in one-letter code: Acetyl-coenzyme A carboxylase carboxyl transferase subunit alpha (316 aa).

Positions 35–292 constitute a CoA carboxyltransferase C-terminal domain; it reads EIEILSQKLE…KTYVLQELKD (258 aa).

Belongs to the AccA family. In terms of assembly, acetyl-CoA carboxylase is a heterohexamer composed of biotin carboxyl carrier protein (AccB), biotin carboxylase (AccC) and two subunits each of ACCase subunit alpha (AccA) and ACCase subunit beta (AccD).

The protein localises to the cytoplasm. The enzyme catalyses N(6)-carboxybiotinyl-L-lysyl-[protein] + acetyl-CoA = N(6)-biotinyl-L-lysyl-[protein] + malonyl-CoA. The protein operates within lipid metabolism; malonyl-CoA biosynthesis; malonyl-CoA from acetyl-CoA: step 1/1. Component of the acetyl coenzyme A carboxylase (ACC) complex. First, biotin carboxylase catalyzes the carboxylation of biotin on its carrier protein (BCCP) and then the CO(2) group is transferred by the carboxyltransferase to acetyl-CoA to form malonyl-CoA. In Alkaliphilus oremlandii (strain OhILAs) (Clostridium oremlandii (strain OhILAs)), this protein is Acetyl-coenzyme A carboxylase carboxyl transferase subunit alpha.